We begin with the raw amino-acid sequence, 562 residues long: NAD-dependent malic enzyme (562 aa).

Y101 serves as the catalytic Proton donor. Residue R154 participates in NAD(+) binding. K172 serves as the catalytic Proton acceptor. A divalent metal cation-binding residues include E243, D244, and D267. Positions 267 and 415 each coordinate NAD(+).

The protein belongs to the malic enzymes family. As to quaternary structure, homotetramer. Requires Mg(2+) as cofactor. It depends on Mn(2+) as a cofactor.

It catalyses the reaction (S)-malate + NAD(+) = pyruvate + CO2 + NADH. It carries out the reaction oxaloacetate + H(+) = pyruvate + CO2. In Shewanella halifaxensis (strain HAW-EB4), this protein is NAD-dependent malic enzyme.